The following is a 388-amino-acid chain: Sex-determination protein fem-3 (388 aa).

6 repeat units span residues 7-10, 110-113, 141-144, 234-237, 284-287, and 371-374.

As to quaternary structure, component of a complex containing fem-1, fem-2 and fem-3. Interacts with fem-1 and fem-2 (via N-terminus). Part of a E3 ubiquitin-protein ligase complex, at least composed of cul-2, elc-1, tra-1, fem-1, fem-2 and fem-3; mediates the ubiquitination and subsequent proteasomal degradation of tra-1. Interacts with tra-1. Interacts with sel-10. Interacts with tra-2.

In terms of biological role, required for male development. In XO (male) animals, fem-3 directs male differentiation in all tissues. In XX (hermaphrodite) animals, it specifies the first 80 or so germ cells to be sperm. Negatively regulates male development when bound to tra-2. Together with fem-2 associates with the CBC(fem-1) E3 ubiquitin-protein ligase complex which mediates the ubiquitination and subsequent proteasomal degradation of tra-1. This is Sex-determination protein fem-3 (fem-3) from Caenorhabditis elegans.